A 104-amino-acid chain; its full sequence is Large ribosomal subunit protein bL21 (104 aa).

The protein belongs to the bacterial ribosomal protein bL21 family. In terms of assembly, part of the 50S ribosomal subunit. Contacts protein L20.

In terms of biological role, this protein binds to 23S rRNA in the presence of protein L20. This is Large ribosomal subunit protein bL21 from Thermodesulfovibrio yellowstonii (strain ATCC 51303 / DSM 11347 / YP87).